The following is a 249-amino-acid chain: 3-deoxy-D-manno-octulosonic acid kinase (249 aa).

Asp175 is a catalytic residue.

Belongs to the protein kinase superfamily. KdkA/RfaP family.

Its subcellular location is the cell inner membrane. The enzyme catalyses an alpha-Kdo-(2-&gt;6)-lipid IVA + ATP = a 4-O-phospho-alpha-Kdo-(2-&gt;6)-lipid IVA + ADP + H(+). The protein operates within bacterial outer membrane biogenesis; LPS core biosynthesis. Catalyzes the ATP-dependent phosphorylation of the 3-deoxy-D-manno-octulosonic acid (Kdo) residue in Kdo-lipid IV(A) at the 4-OH position. In Xylella fastidiosa (strain M23), this protein is 3-deoxy-D-manno-octulosonic acid kinase.